Here is a 329-residue protein sequence, read N- to C-terminus: MQGFVEDFLKPRLVDIQQISATHAKITLEPLERGFGHTLGNALRRILLSSISGCAVTEVEIDGILHEYMHKEGVKEDILDILLNLKGLSIKLFGKDEVTLYLKKSGIGPVLAKDINHDNSTEIINNKHIICNLTCSDASIDIRMKVTRGRGYITAKSRKENYDNEHIIGKLFLDVTYSPIERIMYTVESARVEQRTDLDKLIIEMETNGTIDPEDAIRKAATILAQQLEAFVDLRGVREPEIKEEKPEFEPVLLRPVDDLELTVRSANCLKAESIHYIGDLVQKTEVELLKTPNLGKKSLTEIKDVLASRGLSLGMKLDNWPPKSLLED.

The alpha N-terminal domain (alpha-NTD) stretch occupies residues 1 to 235 (MQGFVEDFLK…QQLEAFVDLR (235 aa)). The segment at 249–329 (FEPVLLRPVD…NWPPKSLLED (81 aa)) is alpha C-terminal domain (alpha-CTD).

Belongs to the RNA polymerase alpha chain family. In terms of assembly, homodimer. The RNAP catalytic core consists of 2 alpha, 1 beta, 1 beta' and 1 omega subunit. When a sigma factor is associated with the core the holoenzyme is formed, which can initiate transcription.

The enzyme catalyses RNA(n) + a ribonucleoside 5'-triphosphate = RNA(n+1) + diphosphate. DNA-dependent RNA polymerase catalyzes the transcription of DNA into RNA using the four ribonucleoside triphosphates as substrates. The polypeptide is DNA-directed RNA polymerase subunit alpha (Buchnera aphidicola subsp. Cinara cedri (strain Cc)).